A 431-amino-acid polypeptide reads, in one-letter code: Glutamate-1-semialdehyde 2,1-aminomutase (431 aa).

The residue at position 269 (K269) is an N6-(pyridoxal phosphate)lysine.

Belongs to the class-III pyridoxal-phosphate-dependent aminotransferase family. HemL subfamily. As to quaternary structure, homodimer. Pyridoxal 5'-phosphate serves as cofactor.

It localises to the cytoplasm. It catalyses the reaction (S)-4-amino-5-oxopentanoate = 5-aminolevulinate. The protein operates within porphyrin-containing compound metabolism; protoporphyrin-IX biosynthesis; 5-aminolevulinate from L-glutamyl-tRNA(Glu): step 2/2. This chain is Glutamate-1-semialdehyde 2,1-aminomutase, found in Francisella tularensis subsp. holarctica (strain FTNF002-00 / FTA).